The primary structure comprises 164 residues: Endoribonuclease YbeY (164 aa).

Zn(2+) is bound by residues H120, H124, and H130.

The protein belongs to the endoribonuclease YbeY family. The cofactor is Zn(2+).

Its subcellular location is the cytoplasm. Its function is as follows. Single strand-specific metallo-endoribonuclease involved in late-stage 70S ribosome quality control and in maturation of the 3' terminus of the 16S rRNA. The protein is Endoribonuclease YbeY of Acidothermus cellulolyticus (strain ATCC 43068 / DSM 8971 / 11B).